The following is a 516-amino-acid chain: MRIIMKKTTLLVILDGWGYSDSDYFNAIKNANTPTWDSIWQEFPKTLINASSLEVGLPRSQMGNSEVGHVNIGCGRVVYQELTKIDKAIEEKTFGDNKAICAAIDNVIKNDSNLHLIGLLSPGGVHSHEEHIFEMIKIAKQKGIKRLYLHAFLDGRDTPPRSAEKSIKKADKLLQDLNLGYIASVCGRYYAMDRDNRWDRVEKAYNAIVNANADFIYDSALEALEQSYARDQSDEFVIPTCIKKDGHLVKVQDNDSVIFMNFRADRAREISHAFTDESFDHFPRKKHLNINFTTLTEYDSKLKCAVAFPPEQPINTLGEVLMKNHKTQLRIAETEKYPHVTFFFNGGREEQFEGEDRILIPSPKVATYDLQPEMSAPEVTDKLVAAINSGKYDCIVCNYANSDMVGHTGNYEAAMQAIEYLDKCIARLKDAILEHDGNMFITADHGNADMMVNPETQKPHTAHTTNLVPFIYVGHKKAQVALEHGKLSDIAPTLLNVMGIAQPKEMTGKTIFNFEK.

Positions 15 and 65 each coordinate Mn(2+). Ser-65 functions as the Phosphoserine intermediate in the catalytic mechanism. Substrate is bound by residues His-126, 156-157 (RD), Arg-188, Arg-194, 263-266 (RADR), and Lys-336. Positions 403, 407, 444, 445, and 463 each coordinate Mn(2+).

Belongs to the BPG-independent phosphoglycerate mutase family. Monomer. Mn(2+) serves as cofactor.

It catalyses the reaction (2R)-2-phosphoglycerate = (2R)-3-phosphoglycerate. It functions in the pathway carbohydrate degradation; glycolysis; pyruvate from D-glyceraldehyde 3-phosphate: step 3/5. Catalyzes the interconversion of 2-phosphoglycerate and 3-phosphoglycerate. This is 2,3-bisphosphoglycerate-independent phosphoglycerate mutase from Francisella tularensis subsp. holarctica (strain OSU18).